We begin with the raw amino-acid sequence, 353 residues long: Quinolinate synthase (353 aa).

Positions 47 and 68 each coordinate iminosuccinate. A [4Fe-4S] cluster-binding site is contributed by Cys-113. Iminosuccinate-binding positions include Tyr-139–Asn-141 and Ser-156. Residue Cys-200 coordinates [4Fe-4S] cluster. Iminosuccinate-binding positions include His-226–Glu-228 and Thr-243. Cys-297 contributes to the [4Fe-4S] cluster binding site.

The protein belongs to the quinolinate synthase family. Type 1 subfamily. [4Fe-4S] cluster serves as cofactor.

Its subcellular location is the cytoplasm. The enzyme catalyses iminosuccinate + dihydroxyacetone phosphate = quinolinate + phosphate + 2 H2O + H(+). It functions in the pathway cofactor biosynthesis; NAD(+) biosynthesis; quinolinate from iminoaspartate: step 1/1. Its function is as follows. Catalyzes the condensation of iminoaspartate with dihydroxyacetone phosphate to form quinolinate. The sequence is that of Quinolinate synthase from Yersinia pestis bv. Antiqua (strain Nepal516).